The sequence spans 62 residues: Large ribosomal subunit protein eL37 (62 aa).

Zn(2+) contacts are provided by Cys20, Cys23, Cys35, and Cys38. A C4-type zinc finger spans residues 20–38; the sequence is CRRCGRRAYHVRKGYCAAC.

It belongs to the eukaryotic ribosomal protein eL37 family. The cofactor is Zn(2+).

Binds to the 23S rRNA. In Methanopyrus kandleri (strain AV19 / DSM 6324 / JCM 9639 / NBRC 100938), this protein is Large ribosomal subunit protein eL37.